Here is a 340-residue protein sequence, read N- to C-terminus: Glyceraldehyde-3-phosphate dehydrogenase, cytosolic (340 aa).

NAD(+)-binding positions include 16 to 17, Asp-38, and Arg-85; that span reads RI. Residues 156–158, Thr-187, 216–217, and Arg-239 contribute to the D-glyceraldehyde 3-phosphate site; these read SCT and TG. Cys-157 serves as the catalytic Nucleophile. Residue Asn-321 participates in NAD(+) binding.

The protein belongs to the glyceraldehyde-3-phosphate dehydrogenase family. Homotetramer.

It localises to the cytoplasm. It carries out the reaction D-glyceraldehyde 3-phosphate + phosphate + NAD(+) = (2R)-3-phospho-glyceroyl phosphate + NADH + H(+). It participates in carbohydrate degradation; glycolysis; pyruvate from D-glyceraldehyde 3-phosphate: step 1/5. Its function is as follows. Key enzyme in glycolysis that catalyzes the first step of the pathway by converting D-glyceraldehyde 3-phosphate (G3P) into 3-phospho-D-glyceroyl phosphate. Essential for the maintenance of cellular ATP levels and carbohydrate metabolism. The chain is Glyceraldehyde-3-phosphate dehydrogenase, cytosolic from Taxus baccata (English yew).